Here is a 347-residue protein sequence, read N- to C-terminus: MGRHSDNSLQESANHTVLLTSPTNTIPKDSRQRSQQFMQNLQDEICTALEQLDGKASFHQDHWERAEGGEGRTRVIREGRVFEQGGVNFSAVWGNSLPASILAQRPEAAGHEFFATGTSMVLHPRNPYVPTVHLNYRYFEAGPIWWFGGGADLTPYYAFKEDAVHFHQTLKNACDVHNPEYYPTFKRWCDEYFYLRHREEQRGIGGIFFDYQDASGKLYVESQTDSSVAIYSQKVGNVARNWEDIFAFVQSCGQAFLPAYLPIVERRQGIEYGDRQRNFQLYRRGRYVEFNLVYDRGTVFGLQTKGRTESILMSLPPLARWEYCYEPEAGSPEAELTEVFLQPRDWV.

A disordered region spans residues 1-31 (MGRHSDNSLQESANHTVLLTSPTNTIPKDSR). The span at 7–31 (NSLQESANHTVLLTSPTNTIPKDSR) shows a compositional bias: polar residues. An important for dimerization region spans residues 75–84 (VIREGRVFEQ). Residue Ser-119 participates in substrate binding. His-133 serves as the catalytic Proton donor. Substrate contacts are provided by residues 135-137 (NYR) and 305-310 (KGRTES). The segment at 287–322 (YVEFNLVYDRGTVFGLQTKGRTESILMSLPPLARWE) is important for dimerization.

Belongs to the aerobic coproporphyrinogen-III oxidase family. In terms of assembly, homodimer.

The protein resides in the cytoplasm. The enzyme catalyses coproporphyrinogen III + O2 + 2 H(+) = protoporphyrinogen IX + 2 CO2 + 2 H2O. Its pathway is porphyrin-containing compound metabolism; protoporphyrin-IX biosynthesis; protoporphyrinogen-IX from coproporphyrinogen-III (O2 route): step 1/1. Key enzyme in heme biosynthesis. Catalyzes the oxidative decarboxylation of propionic acid side chains of rings A and B of coproporphyrinogen III. The polypeptide is Coproporphyrinogen-III oxidase, aerobic 2 (Nostoc sp. (strain PCC 7120 / SAG 25.82 / UTEX 2576)).